The sequence spans 365 residues: 3-dehydroquinate synthase (365 aa).

NAD(+)-binding positions include 75 to 80 (DAENGK), 109 to 113 (GAATD), 133 to 134 (TT), K146, and K155. Zn(2+) is bound by residues E188, H253, and H269.

This sequence belongs to the sugar phosphate cyclases superfamily. Dehydroquinate synthase family. Co(2+) is required as a cofactor. Zn(2+) serves as cofactor. The cofactor is NAD(+).

It is found in the cytoplasm. It catalyses the reaction 7-phospho-2-dehydro-3-deoxy-D-arabino-heptonate = 3-dehydroquinate + phosphate. It functions in the pathway metabolic intermediate biosynthesis; chorismate biosynthesis; chorismate from D-erythrose 4-phosphate and phosphoenolpyruvate: step 2/7. Catalyzes the conversion of 3-deoxy-D-arabino-heptulosonate 7-phosphate (DAHP) to dehydroquinate (DHQ). The sequence is that of 3-dehydroquinate synthase from Corynebacterium glutamicum (strain R).